A 273-amino-acid chain; its full sequence is Zinc finger protein AZF2 (273 aa).

The tract at residues 33-64 (LKRKRSKRQRSHSPSSSSSSPPRSRPKSQNQD) is disordered. Residues 34–43 (KRKRSKRQRS) show a composition bias toward basic residues. The span at 44 to 54 (HSPSSSSSSPP) shows a compositional bias: low complexity. 2 C2H2-type zinc fingers span residues 106-128 (YKCN…KASH) and 165-187 (HECS…KRCH). The disordered stretch occupies residues 195–215 (GGGGGSKSISHSGSVSSTVSE). The span at 201–213 (KSISHSGSVSSTV) shows a compositional bias: low complexity.

Expressed in roots, radicles, cotyledons, hypocotyls, leaf veins, stems, sepals, petals, stamens, placenta, funiculi and maturated seeds.

It localises to the nucleus. Transcriptional repressor involved in the inhibition of plant growth under abiotic stress conditions. Can repress the expression of various genes, including osmotic stress and abscisic acid-repressive genes and auxin-inducible genes, by binding to their promoter regions in a DNA sequence-specific manner. Acts as a negative regulator of abscisic acid (ABA) signaling during seed germination. Probably involved in jasmonate (JA) early signaling response. May regulate the expression of the JA biosynthesis gene LOX3 and control the expression of TIFY10A/JAZ1, a key repressor in the JA signaling cascade. May act as a positive regulator of leaf senescence. Has been identified as a suppressor of the deficiency of yeast snf4 mutant to grow on non-fermentable carbon source. This Arabidopsis thaliana (Mouse-ear cress) protein is Zinc finger protein AZF2 (AZF2).